The primary structure comprises 198 residues: Recombination protein RecR (198 aa).

Residues 57 to 72 (CSICGNLTDDDPCHIC) form a C4-type zinc finger. The Toprim domain maps to 80–175 (TTILVVEDAK…KVTRLARGLA (96 aa)).

This sequence belongs to the RecR family.

Functionally, may play a role in DNA repair. It seems to be involved in an RecBC-independent recombinational process of DNA repair. It may act with RecF and RecO. The protein is Recombination protein RecR of Streptococcus pyogenes serotype M5 (strain Manfredo).